The chain runs to 164 residues: 17.8 kDa class II heat shock protein (164 aa).

The sHSP domain maps to 48 to 164 (DARAMAATPA…KPKTIEVKVA (117 aa)).

It belongs to the small heat shock protein (HSP20) family.

It is found in the cytoplasm. This is 17.8 kDa class II heat shock protein from Zea mays (Maize).